The sequence spans 107 residues: Iron-sulfur cluster assembly protein CyaY (107 aa).

This sequence belongs to the frataxin family.

In terms of biological role, involved in iron-sulfur (Fe-S) cluster assembly. May act as a regulator of Fe-S biogenesis. The chain is Iron-sulfur cluster assembly protein CyaY from Edwardsiella ictaluri (strain 93-146).